The chain runs to 367 residues: MEAYKQWVWRNREYVQSFGSFANGLTWLLPEKFSASEIGPEAVTAFLGIFSTINEHIIENAPTPRGHVGSSGNDPSLSYPLLIAILKDLETVVEVAAEHFYGDKKWNYIILTEAMKAVIRLALFRNSGYKMLLQGGETPNEEKDSNQSESQNRAGNSGRNLGPHGLGNQNHHNPWNLEGRAMSALSSFGQNARTTTSSTPGWSRRIQHQQAVIEPPMIKERRRTMSELLTEKGVNGALFAIGEVLYITRPLIYVLFIRKYGVRSWIPWAISLSVDTLGMGLLANSKWWGEKSKQVHFSGPEKDELRRRKLIWALYLMRDPFFTKYTRQKLESSQKKLELIPLIGFLTEKIVELLEGAQSRYTYISGS.

Residues Gly135 to Asn173 form a disordered region. Residues Gln147–Arg159 are compositionally biased toward polar residues. The next 2 membrane-spanning stretches (helical) occupy residues Ala237–Ile257 and Ser264–Asn284.

The protein belongs to the peroxin-16 family. Interacts with APEM9 (via both N- and C-terminus). In terms of processing, the detection of an additional immunorelated polypeptide of 52 kDa suggests a post-translational modification of PEX16. Expressed in roots, siliques, seeds, cotyledons, leaves and flowers. Low expression in leaves and roots.

The protein resides in the peroxisome membrane. Its subcellular location is the endoplasmic reticulum membrane. Involved in the formation of peroxisomes, lipid bodies and protein bodies. This is Peroxisome biogenesis protein 16 from Arabidopsis thaliana (Mouse-ear cress).